The sequence spans 269 residues: 3'(2'),5'-bisphosphate nucleotidase CysQ (269 aa).

Positions 69, 89, 91, 92, and 216 each coordinate Mg(2+). Position 69 (Glu-69) interacts with substrate. Substrate-binding positions include 91 to 94 and Asp-216; that span reads LDGT.

This sequence belongs to the inositol monophosphatase superfamily. CysQ family. Requires Mg(2+) as cofactor.

It is found in the cell inner membrane. The catalysed reaction is adenosine 3',5'-bisphosphate + H2O = AMP + phosphate. In terms of biological role, converts adenosine-3',5'-bisphosphate (PAP) to AMP. The polypeptide is 3'(2'),5'-bisphosphate nucleotidase CysQ (Haemophilus influenzae (strain ATCC 51907 / DSM 11121 / KW20 / Rd)).